Consider the following 260-residue polypeptide: MRPEDRMFHIRAVILRALSLAFLLSLRGAGAIKADHVSTYAAFVQTHRPTGEFMFEFDEDEMFYVDLDKKETVWHLEEFGQAFSFEAQGGLANIAILNNNLNTLIQRSNHTQATNDPPEVTVFPKEPVELGQPNTLICHIDKFFPPVLNVTWLCNGELVTEGVAESLFLPRTDYSFHKFHYLTFVPSAEDFYDCRVEHWGLDQPLLKHWEAQEPIQMPETTETVLCALGLVLGLVGIIVGTVLIIKSLRSGHDPRAQGTL.

A signal peptide spans 1–28 (MRPEDRMFHIRAVILRALSLAFLLSLRG). Residues 29–115 (AGAIKADHVS…QRSNHTQATN (87 aa)) form an alpha-1 region. The Extracellular portion of the chain corresponds to 29-222 (AGAIKADHVS…EPIQMPETTE (194 aa)). 2 N-linked (GlcNAc...) asparagine glycosylation sites follow: Asn-109 and Asn-149. Positions 116 to 209 (DPPEVTVFPK…GLDQPLLKHW (94 aa)) are alpha-2. Residues 118–210 (PEVTVFPKEP…LDQPLLKHWE (93 aa)) form the Ig-like C1-type domain. A disulfide bridge connects residues Cys-138 and Cys-194. The connecting peptide stretch occupies residues 210 to 222 (EAQEPIQMPETTE). The chain crosses the membrane as a helical span at residues 223 to 245 (TVLCALGLVLGLVGIIVGTVLII). The Cytoplasmic portion of the chain corresponds to 246-260 (KSLRSGHDPRAQGTL).

Belongs to the MHC class II family. Heterodimer of an alpha and a beta subunit; also referred as MHC class II molecule. In the endoplasmic reticulum (ER) it forms a heterononamer; 3 MHC class II molecules bind to a CD74 homotrimer (also known as invariant chain or HLA class II histocompatibility antigen gamma chain). In the endosomal/lysosomal system; CD74 undergoes sequential degradation by various proteases; leaving a small fragment termed CLIP on each MHC class II molecule. MHC class II molecule interacts with HLA_DM, and HLA_DO in B-cells, in order to release CLIP and facilitate the binding of antigenic peptides.

The protein localises to the cell membrane. It is found in the endoplasmic reticulum membrane. Its subcellular location is the golgi apparatus. It localises to the trans-Golgi network membrane. The protein resides in the endosome membrane. The protein localises to the lysosome membrane. In terms of biological role, binds peptides derived from antigens that access the endocytic route of antigen presenting cells (APC) and presents them on the cell surface for recognition by the CD4 T-cells. The peptide binding cleft accommodates peptides of 10-30 residues. The peptides presented by MHC class II molecules are generated mostly by degradation of proteins that access the endocytic route, where they are processed by lysosomal proteases and other hydrolases. Exogenous antigens that have been endocytosed by the APC are thus readily available for presentation via MHC II molecules, and for this reason this antigen presentation pathway is usually referred to as exogenous. As membrane proteins on their way to degradation in lysosomes as part of their normal turn-over are also contained in the endosomal/lysosomal compartments, exogenous antigens must compete with those derived from endogenous components. Autophagy is also a source of endogenous peptides, autophagosomes constitutively fuse with MHC class II loading compartments. In addition to APCs, other cells of the gastrointestinal tract, such as epithelial cells, express MHC class II molecules and CD74 and act as APCs, which is an unusual trait of the GI tract. To produce a MHC class II molecule that presents an antigen, three MHC class II molecules (heterodimers of an alpha and a beta chain) associate with a CD74 trimer in the ER to form a heterononamer. Soon after the entry of this complex into the endosomal/lysosomal system where antigen processing occurs, CD74 undergoes a sequential degradation by various proteases, including CTSS and CTSL, leaving a small fragment termed CLIP (class-II-associated invariant chain peptide). The removal of CLIP is facilitated by HLA-DM via direct binding to the alpha-beta-CLIP complex so that CLIP is released. HLA-DM stabilizes MHC class II molecules until primary high affinity antigenic peptides are bound. The MHC II molecule bound to a peptide is then transported to the cell membrane surface. In B-cells, the interaction between HLA-DM and MHC class II molecules is regulated by HLA-DO. Primary dendritic cells (DCs) also to express HLA-DO. Lysosomal microenvironment has been implicated in the regulation of antigen loading into MHC II molecules, increased acidification produces increased proteolysis and efficient peptide loading. In Homo sapiens (Human), this protein is HLA class II histocompatibility antigen, DP alpha 1 chain (HLA-DPA1).